The primary structure comprises 374 residues: 5-methylthioribulose-1-phosphate isomerase (374 aa).

It belongs to the RuBisCO large chain family. Type IV subfamily.

The enzyme catalyses 5-(methylsulfanyl)-D-ribulose 1-phosphate = S-methyl-1-thio-D-xylulose 5-phosphate. It carries out the reaction 5-(methylsulfanyl)-D-ribulose 1-phosphate = 1-(methylsulfanyl)ribulose 5-phosphate. It functions in the pathway amino-acid biosynthesis; L-methionine biosynthesis via salvage pathway. Its pathway is metabolic intermediate biosynthesis; 1-deoxy-D-xylulose 5-phosphate biosynthesis. In terms of biological role, catalyzes the conversion of 5-methylthio-D-ribulose 1-phosphate (MTRu-1P) to a 3:1 mixture of 1-methylthioxylulose 5-phosphate (MTXu-5P) and 1-methylthioribulose 5-phosphate (MTRu-5P). Involved in the MTA-isoprenoid shunt of the methionine salvage pathway. This Rhodospirillum rubrum (strain ATCC 11170 / ATH 1.1.1 / DSM 467 / LMG 4362 / NCIMB 8255 / S1) protein is 5-methylthioribulose-1-phosphate isomerase.